We begin with the raw amino-acid sequence, 133 residues long: C-C motif chemokine 21b (133 aa).

Positions 1–23 (MAQMMTLSLLSLVLALCIPWTQG) are cleaved as a signal peptide. 3 disulfide bridges follow: Cys-31–Cys-57, Cys-32–Cys-75, and Cys-103–Cys-122. The interval 87-133 (MRRLDQPPAPGKQSPGCRKNRGTSKSGKKGKGSKGCKRTEQTQPSRG) is disordered. The C-terminal basic extension stretch occupies residues 98–133 (KQSPGCRKNRGTSKSGKKGKGSKGCKRTEQTQPSRG). Residues 104–122 (RKNRGTSKSGKKGKGSKGC) show a composition bias toward basic residues.

This sequence belongs to the intercrine beta (chemokine CC) family. As to quaternary structure, binds to CCR7 and to CXCR3. Interacts with PDPN; relocalizes PDPN to the basolateral membrane. Interacts with GPR174. Expressed strongly in lung, spleen, thymus, peripheral and mesentric lymph nodes. Also expressed in the testis, kidney, liver, and heart.

It localises to the secreted. Its function is as follows. Inhibits hemopoiesis and stimulates chemotaxis. Chemotactic in vitro for thymocytes and activated T-cells, but not for B-cells, macrophages, or neutrophils. Potent mesangial cell chemoattractant. Shows preferential activity towards naive T-cells. May play a role in mediating homing of lymphocytes to secondary lymphoid organs. The polypeptide is C-C motif chemokine 21b (Ccl21b) (Mus musculus (Mouse)).